The following is a 289-amino-acid chain: BTB/POZ domain-containing protein KCTD7 (289 aa).

The disordered stretch occupies residues 1-35 (MVVVTGREPDSRRQDGAMSSSDAEDDFLEPATPTA). Positions 51-149 (EVVPLNIGGA…QLENMQPLKG (99 aa)) constitute a BTB domain.

Interacts with CUL3.

It is found in the cell membrane. It localises to the cytoplasm. The protein localises to the cytosol. May be involved in the control of excitability of cortical neurons. The polypeptide is BTB/POZ domain-containing protein KCTD7 (KCTD7) (Homo sapiens (Human)).